The chain runs to 226 residues: Protein FMP52-1, mitochondrial (226 aa).

Residues 1–43 constitute a mitochondrion transit peptide; sequence MSAFVLGSTGLVGLQILKVLDSSTAFKKVSTVSRRLPSVTSGK.

This sequence belongs to the FMP52 family.

Its subcellular location is the mitochondrion outer membrane. This chain is Protein FMP52-1, mitochondrial (FMP521), found in Scheffersomyces stipitis (strain ATCC 58785 / CBS 6054 / NBRC 10063 / NRRL Y-11545) (Yeast).